The sequence spans 534 residues: Pentatricopeptide repeat-containing protein At5g59600 (534 aa).

12 PPR repeats span residues 50-80, 81-115, 116-150, 151-181, 182-216, 217-251, 252-286, 287-321, 322-352, 353-387, 388-418, and 424-454; these read LTRIAAKLVTFYVECGKVLDARKVFDEMPKR, DISGCVVMIGACARNGYYQESLDFFREMYKDGLKL, DAFIVPSLLKASRNLLDREFGKMIHCLVLKFSYES, DAFIVSSLIDMYSKFGEVGNARKVFSDLGEQ, DLVVFNAMISGYANNSQADEALNLVKDMKLLGIKP, DVITWNALISGFSHMRNEEKVSEILELMCLDGYKP, DVVSWTSIISGLVHNFQNEKAFDAFKQMLTHGLYP, NSATIITLLPACTTLAYMKHGKEIHGYSVVTGLED, HGFVRSALLDMYGKCGFISEAMILFRKTPKK, TTVTFNSMIFCYANHGLADKAVELFDQMEATGEKL, DHLTFTAILTACSHAGLTDLGQNLFLLMQNK, and RLEHYACMVDLLGRAGKLVEAYEMIKAMRME. The segment at 459–534 is type E motif; that stretch reads VWGALLAACR…FLGSSWVETV (76 aa).

Belongs to the PPR family. PCMP-E subfamily.

The chain is Pentatricopeptide repeat-containing protein At5g59600 (PCMP-E1) from Arabidopsis thaliana (Mouse-ear cress).